The sequence spans 412 residues: UPF0761 membrane protein lpg0643 (412 aa).

Helical transmembrane passes span 36–56 (ALAF…LAIF), 99–119 (LSIW…FTIE), 137–157 (AFLL…LSLA), 177–197 (ILHY…YVVV), 210–230 (GGLV…YYLI), and 241–261 (AFAT…ITLL).

This sequence belongs to the UPF0761 family.

The protein resides in the cell inner membrane. In Legionella pneumophila subsp. pneumophila (strain Philadelphia 1 / ATCC 33152 / DSM 7513), this protein is UPF0761 membrane protein lpg0643.